An 803-amino-acid chain; its full sequence is Homeobox protein Wariai (803 aa).

Over residues 23–41 the composition is skewed to polar residues; that stretch reads SDYDSYEQQYNNPTGSKQY. The tract at residues 23–144 is disordered; the sequence is SDYDSYEQQY…PTPYSSNSFS (122 aa). Over residues 42–124 the composition is skewed to low complexity; the sequence is NNNNNNNTNT…NNNNNNNNNN (83 aa). Polar residues predominate over residues 125–138; it reads QHLSQSQQLSPTPY. The segment at residues 162 to 221 is a DNA-binding region (homeobox); it reads SKKKRKRTSPDQLKLLEKIFMAHQHPNLNLRSQLAVELHMTARSVQIWFQNRRAKARNME. Residues 288 to 330 are disordered; that stretch reads INGNMGGGGGGGGGSHNHHHHNHNHNHHNHNHNHNHNQPLSNG. Residues 291 to 302 show a composition bias toward gly residues; it reads NMGGGGGGGGGS. Residues 303–322 show a composition bias toward basic residues; sequence HNHHHHNHNHNHHNHNHNHN. ANK repeat units lie at residues 374-403, 407-436, 440-469, 474-503, 507-536, 540-569, 573-602, 606-636, and 642-671; these read KGLSLLFTAAFLGYEYQVRRLIESGANPNI, QGNTPLIAASVLGNQPIVELLLEHRADPNL, EGVSPLFSACKGGHLQIASSLLDHDAEVSV, NGETPLHIASLKGFEKICKLLIETEAKASV, NNRTPLHHACIMGYFSIAKLLICNGADMNA, DGHTPLHTSSLMGHDLITRLLLENGADPNI, EGYTPIHYAVRESRIETVKFLIKFNSKLNI, NGQNLIHLSVQFASLMMGQMIFESKGCEIAA, and QGYTPLYLAAKAGKTNFVKYLLSKGASKKI. The disordered stretch occupies residues 695–760; sequence KSSNNNNSNS…PPGNKFEEDD (66 aa). Residues 696–746 are compositionally biased toward low complexity; that stretch reads SSNNNNSNSNINNINNINNINNINSQPNTNSDNNNNNNNNNFNENYSNGNN.

The protein resides in the nucleus. In terms of biological role, putative transcription factor, that seems to be involved in anterior-posterior patterning of the slug, probably by controlling the proportions of prestalk and prespore cells. The sequence is that of Homeobox protein Wariai (warA) from Dictyostelium discoideum (Social amoeba).